The sequence spans 259 residues: MGVATLPAGGLNWLAVWRRNYLAWKKAALASILGNLADPVIYLFGLGAGLGVMVGRVDGVSYTAFLAAGMIATSAMTAATFETIYAAFGRMQGQRTWEAMLYTQLTQGDIVVGEMAWAATKASLAGTGIGIVAAMLGYTHWLALLYALPVIAITGLAFASLGMVVTALAPSYDYFIFYQTLVITPMLFLSGAVFPVDQLPVAFQQIAAFLPLAHSIDLIRPTMLGQPIANVCLHIGVLCIYIVVPFLVSTALLRRRLMR.

The region spanning Ala-30–Arg-256 is the ABC transmembrane type-2 domain. The next 6 membrane-spanning stretches (helical) occupy residues Ile-32–Val-52, Ala-64–Ile-84, Ala-116–Leu-136, Trp-141–Leu-161, Tyr-174–Phe-194, and Ile-228–Val-248.

This sequence belongs to the ABC-2 integral membrane protein family. Lipooligosaccharide exporter (TC 3.A.1.102) subfamily. As to quaternary structure, the complex is composed of two ATP-binding proteins (NodI) and two transmembrane proteins (NodJ).

Its subcellular location is the cell inner membrane. Functionally, part of the ABC transporter complex NodIJ involved in the export of the nodulation factors (Nod factors), the bacterial signal molecules that induce symbiosis and subsequent nodulation induction. Nod factors are LCO (lipo-chitin oligosaccharide), a modified beta-1,4-linked N-acetylglucosamine oligosaccharide. This subunit encodes the transporter. In Rhizobium leguminosarum bv. viciae, this protein is Nodulation protein J (nodJ).